The primary structure comprises 316 residues: Pantothenate kinase (316 aa).

Residue Gly-99–Ser-106 participates in ATP binding.

It belongs to the prokaryotic pantothenate kinase family.

The protein localises to the cytoplasm. It catalyses the reaction (R)-pantothenate + ATP = (R)-4'-phosphopantothenate + ADP + H(+). It functions in the pathway cofactor biosynthesis; coenzyme A biosynthesis; CoA from (R)-pantothenate: step 1/5. This is Pantothenate kinase (coaA) from Pasteurella multocida (strain Pm70).